We begin with the raw amino-acid sequence, 86 residues long: Thioredoxin (86 aa).

Active-site nucleophile residues include Cys-15 and Cys-18. Cys-15 and Cys-18 are disulfide-bonded.

It belongs to the glutaredoxin family.

Its function is as follows. Does not function as a glutathione-disulfide oxidoreductase in the presence of glutathione and glutathione reductase. Has low thioredoxin activity in vitro. The sequence is that of Thioredoxin from Methanocaldococcus jannaschii (strain ATCC 43067 / DSM 2661 / JAL-1 / JCM 10045 / NBRC 100440) (Methanococcus jannaschii).